Consider the following 561-residue polypeptide: Putative transport protein YbjL (561 aa).

Transmembrane regions (helical) follow at residues 8–28, 32–52, 66–86, 94–114, and 158–178; these read LLNGNYILLLFVVLALGLCLG, LGSVQLGNSIGVLVVSLLLGQ, FMLFIFCVGVEAGPNFFSIFF, MLALVMVGSALLIALGLGKLF, and NLSLGYALTYLIGLVSLIVGA. RCK C-terminal domains follow at residues 200 to 288 and 292 to 373; these read RGLD…SFRN and VFDR…RIGF. 5 consecutive transmembrane segments (helical) span residues 383-403, 406-426, 447-467, 475-495, and 540-560; these read LLAFCAFFIIGLMIGMITFQF, FSFGIGNAAGLLFAGIMLGFL, FGLMVFMAGVGLSAGSGISNG, MLIAGLVVSLVPVVICFLFGA, and AIANVLLTLAGTLIVIIWPGL.

This sequence belongs to the AAE transporter (TC 2.A.81) family. YbjL subfamily.

It is found in the cell membrane. This is Putative transport protein YbjL from Salmonella dublin (strain CT_02021853).